The chain runs to 208 residues: Thymidylate kinase (208 aa).

10–17 (GPEGSGKT) serves as a coordination point for ATP.

The protein belongs to the thymidylate kinase family.

It carries out the reaction dTMP + ATP = dTDP + ADP. In terms of biological role, phosphorylation of dTMP to form dTDP in both de novo and salvage pathways of dTTP synthesis. This Bacillus mycoides (strain KBAB4) (Bacillus weihenstephanensis) protein is Thymidylate kinase.